Reading from the N-terminus, the 402-residue chain is 1-deoxy-D-xylulose 5-phosphate reductoisomerase (402 aa).

The NADPH site is built by threonine 13, glycine 14, serine 15, isoleucine 16, and asparagine 126. Lysine 127 is a 1-deoxy-D-xylulose 5-phosphate binding site. Residue glutamate 128 coordinates NADPH. Aspartate 152 is a Mn(2+) binding site. Residues serine 153, glutamate 154, serine 188, and histidine 211 each coordinate 1-deoxy-D-xylulose 5-phosphate. Glutamate 154 contacts Mn(2+). Glycine 217 contacts NADPH. 1-deoxy-D-xylulose 5-phosphate-binding residues include serine 224, asparagine 229, lysine 230, and glutamate 233. Glutamate 233 lines the Mn(2+) pocket.

The protein belongs to the DXR family. Requires Mg(2+) as cofactor. The cofactor is Mn(2+).

It carries out the reaction 2-C-methyl-D-erythritol 4-phosphate + NADP(+) = 1-deoxy-D-xylulose 5-phosphate + NADPH + H(+). It functions in the pathway isoprenoid biosynthesis; isopentenyl diphosphate biosynthesis via DXP pathway; isopentenyl diphosphate from 1-deoxy-D-xylulose 5-phosphate: step 1/6. In terms of biological role, catalyzes the NADPH-dependent rearrangement and reduction of 1-deoxy-D-xylulose-5-phosphate (DXP) to 2-C-methyl-D-erythritol 4-phosphate (MEP). This is 1-deoxy-D-xylulose 5-phosphate reductoisomerase from Psychrobacter cryohalolentis (strain ATCC BAA-1226 / DSM 17306 / VKM B-2378 / K5).